Reading from the N-terminus, the 406-residue chain is Phosphopentomutase (406 aa).

Mn(2+)-binding residues include Asp-10, Asp-305, His-310, Asp-346, His-347, and His-358.

The protein belongs to the phosphopentomutase family. Requires Mn(2+) as cofactor.

The protein localises to the cytoplasm. It catalyses the reaction 2-deoxy-alpha-D-ribose 1-phosphate = 2-deoxy-D-ribose 5-phosphate. The enzyme catalyses alpha-D-ribose 1-phosphate = D-ribose 5-phosphate. It functions in the pathway carbohydrate degradation; 2-deoxy-D-ribose 1-phosphate degradation; D-glyceraldehyde 3-phosphate and acetaldehyde from 2-deoxy-alpha-D-ribose 1-phosphate: step 1/2. In terms of biological role, isomerase that catalyzes the conversion of deoxy-ribose 1-phosphate (dRib-1-P) and ribose 1-phosphate (Rib-1-P) to deoxy-ribose 5-phosphate (dRib-5-P) and ribose 5-phosphate (Rib-5-P), respectively. This chain is Phosphopentomutase, found in Sinorhizobium fredii (strain NBRC 101917 / NGR234).